A 721-amino-acid chain; its full sequence is Polyribonucleotide nucleotidyltransferase (721 aa).

The Mg(2+) site is built by D495 and D501. The region spanning 562–621 is the KH domain; that stretch reads PRITTIKIRPERIKDIIGPGGKTIKDITARTGTSINIEDDGSVSIASPNQDKVEEAIKMI. Residues 631 to 699 enclose the S1 motif domain; it reads GRIYLGTVRK…RSGKIRLSRK (69 aa). The disordered stretch occupies residues 699 to 721; it reads KEALADSAKKSEGTEPPKGEPAK.

Belongs to the polyribonucleotide nucleotidyltransferase family. Mg(2+) is required as a cofactor.

The protein resides in the cytoplasm. It carries out the reaction RNA(n+1) + phosphate = RNA(n) + a ribonucleoside 5'-diphosphate. In terms of biological role, involved in mRNA degradation. Catalyzes the phosphorolysis of single-stranded polyribonucleotides processively in the 3'- to 5'-direction. This chain is Polyribonucleotide nucleotidyltransferase, found in Anaeromyxobacter dehalogenans (strain 2CP-1 / ATCC BAA-258).